Reading from the N-terminus, the 133-residue chain is Small ribosomal subunit protein uS8 (133 aa).

Belongs to the universal ribosomal protein uS8 family. In terms of assembly, part of the 30S ribosomal subunit. Contacts proteins S5 and S12.

In terms of biological role, one of the primary rRNA binding proteins, it binds directly to 16S rRNA central domain where it helps coordinate assembly of the platform of the 30S subunit. This Lachnoclostridium phytofermentans (strain ATCC 700394 / DSM 18823 / ISDg) (Clostridium phytofermentans) protein is Small ribosomal subunit protein uS8.